The chain runs to 304 residues: CD-NTase-associated protein 6 (304 aa).

75-80 (GTGKTS) is a binding site for ATP.

The protein belongs to the AAA ATPase family. As to quaternary structure, oligomerizes. Homohexamer. Forms a 1:1:6 CdnD:Cap7:Cap6 complex.

Its function is as follows. Regulates complex assembly in a CBASS antivirus system. CBASS (cyclic oligonucleotide-based antiphage signaling system) provides immunity against bacteriophage. The CD-NTase protein synthesizes cyclic nucleotides in response to infection; these serve as specific second messenger signals. The signals activate a diverse range of effectors, leading to bacterial cell death and thus abortive phage infection. A type III-C(AAA) CBASS system. Functionally, prevents the CdnD:Cap7:Cap8 complex (also called CdnD:HORMA2:HORMA3) from synthesizing 2',3',3'-cyclic AMP-AMP-AMP (cAAA). Binds and disassembles an active CdnD:Cap7:Cap8 complex, inhibiting the complex's ability to synthesize cyclic nucleotide second messengers. An AAA+-ATPase remodeler, in the absence of foreign threat Cap6 probably maintains the Cap7 protein in an open, inactive state. Once activated (presumably by a bacteriophage protein) Cap7 binds to and activates its cognate CD-NTase (CdnD in this bacteria) to synthesize cAAA, a cyclic nucleotide second messenger. cAAA activates the NucC endonuclease which degrades all DNA in the infected cell, causing cell death and abortive phage infection. The chain is CD-NTase-associated protein 6 from Pseudomonas aeruginosa.